The following is a 392-amino-acid chain: uncharacterized protein (392 aa).

Positions 7-76 (TEYYDLLGIS…RSQYDQFGKE (70 aa)) constitute a J domain. S108 carries the post-translational modification Phosphoserine.

This is an uncharacterized protein from Schizosaccharomyces pombe (strain 972 / ATCC 24843) (Fission yeast).